A 243-amino-acid chain; its full sequence is MNNTSKLLNLSNVSYYIGQQRLLSHINIDIAVNETISVIGPNGAGKSTLVKLILGLIEPTSGQVTPSAPLQIGYVPQRFSVPPILPLRVSDLLAQAHKKRLMAEQRQFIFDKLSLTHLLSRQMLHLSGGETQRVLLARALLDKPNLLILDEPMQGLDPETEVWLYQFIDELPEFLRCAMLVVSHDLHWVMKGSRRVICLNKHICCEGQPSELAISSEFQKLFGHHYEQPYVHQPHACEHHAPS.

In terms of domain architecture, ABC transporter spans 8-225; the sequence is LNLSNVSYYI…SEFQKLFGHH (218 aa). 40–47 provides a ligand contact to ATP; sequence GPNGAGKS.

The protein belongs to the ABC transporter superfamily. Zinc importer (TC 3.A.1.15.5) family. In terms of assembly, the complex is composed of two ATP-binding proteins (ZnuC), two transmembrane proteins (ZnuB) and a solute-binding protein (ZnuA).

The protein localises to the cell inner membrane. It catalyses the reaction Zn(2+)(out) + ATP(in) + H2O(in) = Zn(2+)(in) + ADP(in) + phosphate(in) + H(+)(in). Its function is as follows. Part of the ABC transporter complex ZnuABC involved in zinc import. Responsible for energy coupling to the transport system. This chain is Zinc import ATP-binding protein ZnuC, found in Psychrobacter arcticus (strain DSM 17307 / VKM B-2377 / 273-4).